The primary structure comprises 292 residues: Putative rRNA 2'-O-methyltransferase fibrillarin 3 (292 aa).

Residues Met-1–Lys-58 are disordered. The span at Gly-7–Pro-42 shows a compositional bias: gly residues. Residues Tyr-146 to Thr-147, Glu-165 to His-166, Asp-190 to Ala-191, and Asp-210 to His-213 contribute to the S-adenosyl-L-methionine site.

This sequence belongs to the methyltransferase superfamily. Fibrillarin family. As to quaternary structure, component of box C/D small nucleolar ribonucleoprotein (snoRNP) particles. In terms of tissue distribution, not detectable by RT-PCR.

Its subcellular location is the nucleus. It is found in the nucleolus. It carries out the reaction L-glutaminyl-[histone H2A] + S-adenosyl-L-methionine = N(5)-methyl-L-glutaminyl-[histone H2A] + S-adenosyl-L-homocysteine + H(+). S-adenosyl-L-methionine-dependent methyltransferase that has the ability to methylate both RNAs and proteins. Involved in pre-rRNA processing. Utilizes the methyl donor S-adenosyl-L-methionine to catalyze the site-specific 2'-hydroxyl methylation of ribose moieties in pre-ribosomal RNA. Site specificity is provided by a guide RNA that base pairs with the substrate. Methylation occurs at a characteristic distance from the sequence involved in base pairing with the guide RNA. Also acts as a protein methyltransferase by mediating methylation of 'Gln-105' of histone H2A (H2AQ105me), a modification that impairs binding of the FACT complex and is specifically present at 35S ribosomal DNA locus. The chain is Putative rRNA 2'-O-methyltransferase fibrillarin 3 (FIB3) from Arabidopsis thaliana (Mouse-ear cress).